Consider the following 1025-residue polypeptide: Multidrug resistance protein MdtC (1025 aa).

The next 12 helical transmembrane spans lie at 3–23 (FFALFIYRPVATILLSVAITL), 333–353 (EVEQTLIISVALVILVVFLFL), 360–380 (IIPAVAVPVSLIGTFAAMYLC), 387–407 (LSLMALTIATGFVVDDAIVVL), 431–451 (VGFTVLSMSLSLVAVFLPLLL), 463–483 (FAVTLSVAIGISLLVSLTLTP), 528–548 (LVGVVLLGTIALNIWLYISIP), 853–873 (VILIIAAIATVYIVLGILYES), 875–895 (VHPLTILSTLPSAGVGALLAL), 897–917 (LFNAPFSLIALIGIMLLIGIV), 953–973 (PIMMTTLAALFGALPLVLSGG), and 984–1004 (ITIVGGLVMSQLLTLYTTPVV).

This sequence belongs to the resistance-nodulation-cell division (RND) (TC 2.A.6) family. MdtC subfamily. In terms of assembly, part of a tripartite efflux system composed of MdtA, MdtB and MdtC. MdtC forms a heteromultimer with MdtB.

The protein localises to the cell inner membrane. Its function is as follows. The MdtABC tripartite complex confers resistance against novobiocin and deoxycholate. The sequence is that of Multidrug resistance protein MdtC from Escherichia coli O127:H6 (strain E2348/69 / EPEC).